Here is a 232-residue protein sequence, read N- to C-terminus: Protein DOG1-like 4 (232 aa).

The region spanning 9–229 is the DOG1 domain; sequence EEKFLEFYES…RRWGNRRHYV (221 aa).

The chain is Protein DOG1-like 4 from Arabidopsis thaliana (Mouse-ear cress).